A 213-amino-acid chain; its full sequence is Protein DMP3 (213 aa).

Residues 1–27 (MSSPSSLTQRNPTSSQEQSESVPQLRR) form a disordered region. 4 consecutive transmembrane segments (helical) span residues 45–65 (LANL…PVFT), 74–94 (TQVL…LSSF), 136–156 (IRII…AVAL), and 176–196 (VLDI…LVFP).

It belongs to the plant DMP1 protein family. In terms of tissue distribution, expressed in leaves, siliques and roots (e.g. root hairs).

It is found in the endoplasmic reticulum membrane. In terms of biological role, involved in membrane remodeling. The polypeptide is Protein DMP3 (Arabidopsis thaliana (Mouse-ear cress)).